We begin with the raw amino-acid sequence, 202 residues long: Holliday junction branch migration complex subunit RuvA (202 aa).

The tract at residues methionine 1 to alanine 64 is domain I. The segment at serine 65 to alanine 143 is domain II. Residues leucine 144–proline 154 form a flexible linker region. Residues proline 154–isoleucine 202 are domain III.

Belongs to the RuvA family. Homotetramer. Forms an RuvA(8)-RuvB(12)-Holliday junction (HJ) complex. HJ DNA is sandwiched between 2 RuvA tetramers; dsDNA enters through RuvA and exits via RuvB. An RuvB hexamer assembles on each DNA strand where it exits the tetramer. Each RuvB hexamer is contacted by two RuvA subunits (via domain III) on 2 adjacent RuvB subunits; this complex drives branch migration. In the full resolvosome a probable DNA-RuvA(4)-RuvB(12)-RuvC(2) complex forms which resolves the HJ.

It localises to the cytoplasm. Its function is as follows. The RuvA-RuvB-RuvC complex processes Holliday junction (HJ) DNA during genetic recombination and DNA repair, while the RuvA-RuvB complex plays an important role in the rescue of blocked DNA replication forks via replication fork reversal (RFR). RuvA specifically binds to HJ cruciform DNA, conferring on it an open structure. The RuvB hexamer acts as an ATP-dependent pump, pulling dsDNA into and through the RuvAB complex. HJ branch migration allows RuvC to scan DNA until it finds its consensus sequence, where it cleaves and resolves the cruciform DNA. The polypeptide is Holliday junction branch migration complex subunit RuvA (Pseudomonas fluorescens (strain ATCC BAA-477 / NRRL B-23932 / Pf-5)).